We begin with the raw amino-acid sequence, 357 residues long: MTQPVQTIDVLLAEHADLERRLSDPDLHSNPDEARKAGRRFARLAPIVGTYRKLMAAREDLETARELAADDDSFTAEVADLESRVAQLDTQLTDMLAPRDSHDADDIVLEVKSGEGGEESALFAADLARMYIRYAERHGWTVTVLDEITSDLGGYKDATLSIRSKGDSADGVWSRMKFEGGVHRVQRVPVTESQGRVHTSAAGVLVYPEPEEVAEVQIDESDLRIDVFRSSGKGGQGVNTTDSAVRITHLPTGVVVTCQNERSQLQNKARALQVLAARLQAMAEEQASAEASADRASQIRTVDRSERIRTYNFPENRITDHRIGFKAHNLDQVLDGDLDALFDALAAADKQSRLQQA.

N5-methylglutamine is present on Gln-236.

The protein belongs to the prokaryotic/mitochondrial release factor family. Methylated by PrmC. Methylation increases the termination efficiency of RF1.

It is found in the cytoplasm. Functionally, peptide chain release factor 1 directs the termination of translation in response to the peptide chain termination codons UAG and UAA. This Mycobacterium avium (strain 104) protein is Peptide chain release factor 1.